Consider the following 663-residue polypeptide: Subtilisin-like serine protease (663 aa).

Positions 1 to 23 (MKKFGAVVLALFLVGLMAGSVLA) are cleaved as a signal peptide. Residues 24-136 (APQKPAVRNV…IQEDYVVKVA (113 aa)) constitute a propeptide, removed in mature form. The Peptidase S8 domain maps to 139-439 (TEGLDESAAQ…AGRVNAYKAA (301 aa)). Active-site charge relay system residues include D170, H203, and S382. The Ca(2+) site is built by P420, I423, D483, L484, D485, D497, Y498, T501, and E507. The segment at 537 to 565 (VSDGSLGQPSGGGSEPSPSPSPEPTVDEK) is disordered. The propeptide at 563 to 663 (DEKTFTGTVH…YQLDAKVYYG (101 aa)) is removed in mature form.

It belongs to the peptidase S8 family. Monomer.

It catalyses the reaction Hydrolysis of proteins with broad specificity for peptide bonds, and a preference for a large uncharged residue in P1. Hydrolyzes peptide amides.. Resistant to treatment with 5% SDS, 8 M urea, 10% Triton X-100 or 10% Tween-20. Fully active although less stable in the presence of 10 mM EDTA. Activity not affected by the absence or presence of 10 mM CaCl(2). Unstable in the presence of 2 M or over GdnHCl and loses 35% and 99% of its activity upon incubation with 2 and 4 M GdnHCl, respectively, for 1 hour at 55 degrees Celsius. Nearly fully loses activity upon incubation at pH 2.0. Serine protease with a broad substrate specificity. The chain is Subtilisin-like serine protease from Thermococcus kodakarensis (strain ATCC BAA-918 / JCM 12380 / KOD1) (Pyrococcus kodakaraensis (strain KOD1)).